Consider the following 316-residue polypeptide: tRNA-dihydrouridine(16) synthase (316 aa).

Residues 7–9 (PME) and glutamine 68 contribute to the FMN site. The active-site Proton donor is the cysteine 98. Residues lysine 139, 200–202 (NGE), and 224–225 (GR) each bind FMN.

This sequence belongs to the Dus family. DusC subfamily. The cofactor is FMN.

It catalyses the reaction 5,6-dihydrouridine(16) in tRNA + NADP(+) = uridine(16) in tRNA + NADPH + H(+). It carries out the reaction 5,6-dihydrouridine(16) in tRNA + NAD(+) = uridine(16) in tRNA + NADH + H(+). In terms of biological role, catalyzes the synthesis of 5,6-dihydrouridine (D), a modified base found in the D-loop of most tRNAs, via the reduction of the C5-C6 double bond in target uridines. Specifically modifies U16 in tRNAs. This Escherichia coli O157:H7 protein is tRNA-dihydrouridine(16) synthase.